The sequence spans 772 residues: MAKIDKKTKLKLNKKSVRAPSKPTTEKKPKKYVTADTLTWKPVKTSSFSGIDGGGGMMMLEELEDVGIEWEETDGGRKIAKFVEVESKTSKGKKNAAQEEPNQEGRGDDEKASSASETEEGKKADDKEAVEEDDEEEFPDFAGFAEEDLNAADEEEHPNLDDEPAFNDDLLPEWSSISLHPSLKRSFLASSFTAPTAIQSRAIPAGITGRDVVGVAETGSGKTLAYSLPILHYLLGQRKSKAGIKRPLSALVLCPTRELALQVMDHLNALLKHALATPDGEKPQGPPRVSVGSVVGGLSAQKQKRILERGCDVIVATPGRLWDLIKADDELATSVRTLRFLVIDEADRMIENGHFAELESIVKLTQRSTAQQGPDDDDPVFQAMATLFEESTAREDMQTFVFSATLSKDLQKNLKRRSRSWKGKGKRSSTLEDLVEKLDFRDENPEVIDLSPEGGVVSSLRESMIESTKDDKDLYLYYFLLRYPGRSIVFVNSIDSIRRLLPLLTLLQLPVFPLHSHLQQKQRLKNLDRFKSNPKGILIATDVAARGLDIPQVDHVVHFNLPRTADAYIHRSGRTARAQNEGFALQLVSPDEKSVQRALMKSLERTHELPDLPIEAGFLPSLRERLRVATEIEKAQHRATKATHDKNWLLEAAEAMDIDIDPSMLDGEDDDPDAPYYKPKKQDRGKGKASVENLKMELKALLQEKLVARGVSIRYPTSGSKVIVDDLIKSTGHGMLLGASTSKAYDQVEKTGKRKLGSGRPGAVKKKKVEGR.

2 disordered regions span residues 1 to 30 and 84 to 138; these read MAKI…KKPK and EVES…EEEF. Residues 8-17 show a composition bias toward basic residues; the sequence is TKLKLNKKSV. Basic and acidic residues predominate over residues 103 to 112; sequence QEGRGDDEKA. Residues 128–138 show a composition bias toward acidic residues; that stretch reads EAVEEDDEEEF. Positions 172 to 200 match the Q motif motif; it reads PEWSSISLHPSLKRSFLASSFTAPTAIQS. A Helicase ATP-binding domain is found at 203-424; sequence IPAGITGRDV…KRRSRSWKGK (222 aa). An ATP-binding site is contributed by 216-223; it reads AETGSGKT. The short motif at 344 to 347 is the DEAD box element; the sequence is DEAD. One can recognise a Helicase C-terminal domain in the interval 473–618; sequence DLYLYYFLLR…LPDLPIEAGF (146 aa). The segment covering 663 to 673 has biased composition (acidic residues); it reads SMLDGEDDDPD. 2 disordered regions span residues 663–689 and 748–772; these read SMLD…KGKA and VEKT…VEGR. Residues 752–772 are compositionally biased toward basic residues; that stretch reads GKRKLGSGRPGAVKKKKVEGR.

This sequence belongs to the DEAD box helicase family. DDX24/MAK5 subfamily.

It is found in the nucleus. The protein resides in the nucleolus. It catalyses the reaction ATP + H2O = ADP + phosphate + H(+). ATP-binding RNA helicase involved in the biogenesis of 60S ribosomal subunits and is required for the normal formation of 25S and 5.8S rRNAs. This chain is ATP-dependent RNA helicase MAK5 (MAK5), found in Cryptococcus neoformans var. neoformans serotype D (strain B-3501A) (Filobasidiella neoformans).